We begin with the raw amino-acid sequence, 465 residues long: ATP synthase subunit beta (465 aa).

Residue 155–162 coordinates ATP; the sequence is GGAGVGKT.

The protein belongs to the ATPase alpha/beta chains family. In terms of assembly, F-type ATPases have 2 components, CF(1) - the catalytic core - and CF(0) - the membrane proton channel. CF(1) has five subunits: alpha(3), beta(3), gamma(1), delta(1), epsilon(1). CF(0) has three main subunits: a(1), b(2) and c(9-12). The alpha and beta chains form an alternating ring which encloses part of the gamma chain. CF(1) is attached to CF(0) by a central stalk formed by the gamma and epsilon chains, while a peripheral stalk is formed by the delta and b chains.

It is found in the cell membrane. The enzyme catalyses ATP + H2O + 4 H(+)(in) = ADP + phosphate + 5 H(+)(out). Produces ATP from ADP in the presence of a proton gradient across the membrane. The catalytic sites are hosted primarily by the beta subunits. In Buchnera aphidicola subsp. Acyrthosiphon pisum (strain 5A), this protein is ATP synthase subunit beta.